We begin with the raw amino-acid sequence, 1024 residues long: Importin-8 (1024 aa).

An Importin N-terminal domain is found at Ala22–Arg102. A disordered region spans residues Phe896–Gly969. 2 stretches are compositionally biased toward acidic residues: residues Ser902 to Val917 and Asp934 to Leu952.

This sequence belongs to the importin beta family.

The protein resides in the cytoplasm. It localises to the nucleus. In terms of biological role, involved in nuclear protein import, either by acting as autonomous nuclear transport receptor or as an adapter-like protein in association with the importin-beta subunit KPNB1. Acting autonomously, may serve as receptor for nuclear localization signals (NLS) and promote translocation of import substrates through the nuclear pore complex (NPC) by an energy requiring, Ran-dependent mechanism. At the nucleoplasmic side of the NPC, Ran binds to importin, the importin/substrate complex dissociates and importin is re-exported from the nucleus to the cytoplasm where GTP hydrolysis releases Ran. The directionality of nuclear import is thought to be conferred by an asymmetric distribution of the GTP- and GDP-bound forms of Ran between the cytoplasm and nucleus. In vitro mediates the nuclear import of the signal recognition particle protein SRP19. May also be involved in cytoplasm-to-nucleus shuttling of a broad spectrum of other cargos, including Argonaute-microRNAs complexes, the JUN protein, RELA/NF-kappa-B p65 subunit, the translation initiation factor EIF4E and a set of receptor-activated mothers against decapentaplegic homolog (SMAD) transcription factors that play a critical role downstream of the large family of transforming growth factor beta and bone morphogenetic protein (BMP) cytokines. This Danio rerio (Zebrafish) protein is Importin-8 (ipo8).